The sequence spans 153 residues: Transcriptional repressor NrdR (153 aa).

The segment at Cys-3–Cys-34 is a zinc-finger region. The ATP-cone domain maps to Leu-49–Arg-136.

This sequence belongs to the NrdR family. It depends on Zn(2+) as a cofactor.

Its function is as follows. Negatively regulates transcription of bacterial ribonucleotide reductase nrd genes and operons by binding to NrdR-boxes. This Thermus thermophilus (strain ATCC BAA-163 / DSM 7039 / HB27) protein is Transcriptional repressor NrdR.